A 428-amino-acid polypeptide reads, in one-letter code: Glutamine synthetase, chloroplastic (428 aa).

Residues 1–48 (MAQAVVPAMQCQVGAVRARPAAAAAAAGGRVWGVRRTGRGTSGFRVMA) constitute a chloroplast transit peptide. One can recognise a GS beta-grasp domain in the interval 75–155 (IIAEYIWVGG…VMCDTYTPAG (81 aa)). The interval 95–120 (TISKPVEDPSELPKWNYDGSSTGQAP) is disordered. One can recognise a GS catalytic domain in the interval 159 to 428 (PTNKRNRAAQ…LAAKKLALKV (270 aa)).

Belongs to the glutamine synthetase family. In terms of assembly, homooctamer.

It is found in the plastid. It localises to the chloroplast. The enzyme catalyses L-glutamate + NH4(+) + ATP = L-glutamine + ADP + phosphate + H(+). Light-modulated chloroplastic glutamine synthetase, encoded by a nuclear gene and expressed primarily in leaves, and which is responsible for the reassimilation of the ammonia generated by photorespiration. In Oryza sativa subsp. japonica (Rice), this protein is Glutamine synthetase, chloroplastic.